A 163-amino-acid chain; its full sequence is Nucleotide-binding protein YajQ (163 aa).

Belongs to the YajQ family.

Nucleotide-binding protein. The sequence is that of Nucleotide-binding protein YajQ from Shigella dysenteriae serotype 1 (strain Sd197).